Here is a 611-residue protein sequence, read N- to C-terminus: Phosphoenolpyruvate carboxykinase [GTP] (611 aa).

Substrate is bound by residues Arg82 and 222 to 224 (YGG). Mn(2+)-binding residues include Lys231 and His251. Ser273 is a binding site for substrate. 274–279 (ACGKTN) lines the GTP pocket. Cys275 is an active-site residue. Asp298 serves as a coordination point for Mn(2+). 389 to 391 (NSR) lines the substrate pocket. GTP is bound by residues Arg391, Arg422, and 517–520 (FGDN).

It belongs to the phosphoenolpyruvate carboxykinase [GTP] family. As to quaternary structure, monomer. It depends on Mn(2+) as a cofactor.

Its subcellular location is the cytoplasm. It carries out the reaction oxaloacetate + GTP = phosphoenolpyruvate + GDP + CO2. The protein operates within carbohydrate biosynthesis; gluconeogenesis. Its function is as follows. Catalyzes the conversion of oxaloacetate (OAA) to phosphoenolpyruvate (PEP), the rate-limiting step in the metabolic pathway that produces glucose from lactate and other precursors derived from the citric acid cycle. The polypeptide is Phosphoenolpyruvate carboxykinase [GTP] (Arthrobacter sp. (strain FB24)).